We begin with the raw amino-acid sequence, 135 residues long: Small ribosomal subunit protein bS6 (135 aa).

Positions 99-135 are disordered; the sequence is EKSAMLSHLDRNAHAGQDEERSRSPRRQRENAIERVE.

This sequence belongs to the bacterial ribosomal protein bS6 family.

Binds together with bS18 to 16S ribosomal RNA. This is Small ribosomal subunit protein bS6 from Bartonella tribocorum (strain CIP 105476 / IBS 506).